A 254-amino-acid polypeptide reads, in one-letter code: Glutamate racemase (254 aa).

Substrate contacts are provided by residues 7-8 and 39-40; these read DS and YG. The Proton donor/acceptor role is filled by cysteine 70. 71–72 is a substrate binding site; it reads NT. Cysteine 178 acts as the Proton donor/acceptor in catalysis. 179–180 is a substrate binding site; it reads TH.

Belongs to the aspartate/glutamate racemases family.

The catalysed reaction is L-glutamate = D-glutamate. It functions in the pathway cell wall biogenesis; peptidoglycan biosynthesis. Functionally, provides the (R)-glutamate required for cell wall biosynthesis. This Aquifex aeolicus (strain VF5) protein is Glutamate racemase.